A 199-amino-acid chain; its full sequence is Ras-related protein Rab-7b (199 aa).

GTP is bound by residues 15–22, 34–40, 63–67, 124–127, and 154–155; these read GAIGVGKT, YEEYQTT, DTGGQ, NKID, and AK. 2 short sequence motifs (switch) span residues 28–41 and 67–82; these read YVHK…QTTL and QERF…KGSD. Ser-186 bears the Phosphoserine mark. 2 S-geranylgeranyl cysteine lipidation sites follow: Cys-198 and Cys-199.

Belongs to the small GTPase superfamily. Rab family. In terms of tissue distribution, expressed in heart, placenta, lung, skeletal muscle and peripheral blood leukocyte.

The protein resides in the late endosome. The protein localises to the lysosome. It is found in the golgi apparatus. It localises to the trans-Golgi network. Its subcellular location is the cytoplasmic vesicle. The protein resides in the phagosome. The protein localises to the phagosome membrane. Its function is as follows. Controls vesicular trafficking from endosomes to the trans-Golgi network (TGN). Acts as a negative regulator of TLR9 signaling and can suppress TLR9-triggered TNFA, IL6, and IFNB production in macrophages by promoting TLR9 lysosomal degradation. Also negatively regulates TLR4 signaling in macrophages by promoting lysosomal degradation of TLR4. Promotes megakaryocytic differentiation by increasing NF-kappa-B-dependent IL6 production and subsequently enhancing the association of STAT3 with GATA1. Not involved in the regulation of the EGF- and EGFR degradation pathway. In Homo sapiens (Human), this protein is Ras-related protein Rab-7b (RAB7B).